The following is a 137-amino-acid chain: Large ribosomal subunit protein uL16 (137 aa).

Belongs to the universal ribosomal protein uL16 family. In terms of assembly, part of the 50S ribosomal subunit.

Binds 23S rRNA and is also seen to make contacts with the A and possibly P site tRNAs. This Bartonella quintana (strain Toulouse) (Rochalimaea quintana) protein is Large ribosomal subunit protein uL16.